The chain runs to 532 residues: [Pyruvate dehydrogenase [acetyl-transferring]]-phosphatase 2, mitochondrial (532 aa).

Residues 1–69 (MSSTVSYWIF…FALRKAYRHT (69 aa)) constitute a mitochondrion transit peptide. The PPM-type phosphatase domain maps to 107–518 (NSVLRFESNQ…YRDDITVMVV (412 aa)). Mn(2+)-binding residues include Asp-144, Gly-145, Asp-415, and Asp-511.

The protein belongs to the PP2C family. The cofactor is Mg(2+).

The protein resides in the mitochondrion. The enzyme catalyses O-phospho-L-seryl-[pyruvate dehydrogenase E1 alpha subunit] + H2O = L-seryl-[pyruvate dehydrogenase E1 alpha subunit] + phosphate. Its function is as follows. Mitochondrial enzyme that catalyzes the dephosphorylation and concomitant reactivation of the alpha subunit of the E1 component of the pyruvate dehydrogenase complex (PDC), thereby stimulating the conversion of pyruvate into acetyl-CoA. Acts as a crucial regulator of T cell metabolism and function, with a particular focus on T-helper Th17. This Mus musculus (Mouse) protein is [Pyruvate dehydrogenase [acetyl-transferring]]-phosphatase 2, mitochondrial (Pdp2).